The sequence spans 454 residues: Na(+)/H(+) antiporter NhaA (454 aa).

The next 10 membrane-spanning stretches (helical) occupy residues 22–42 (ISGL…NLPF), 64–84 (MGLG…TVGL), 106–126 (LCAV…ISLF), 150–170 (GWAV…ALFA), 190–210 (LLAI…YWFL), 228–248 (VPWL…FEAG), 284–304 (PFSA…VHFE), 306–326 (LTLA…LVVG), 355–375 (MFPA…IASL), and 386–406 (ARFG…ILLS).

Belongs to the NhaA Na(+)/H(+) (TC 2.A.33) antiporter family.

It is found in the cell membrane. It carries out the reaction Na(+)(in) + 2 H(+)(out) = Na(+)(out) + 2 H(+)(in). Its function is as follows. Na(+)/H(+) antiporter that extrudes sodium in exchange for external protons. The chain is Na(+)/H(+) antiporter NhaA from Bifidobacterium adolescentis (strain ATCC 15703 / DSM 20083 / NCTC 11814 / E194a).